The following is a 334-amino-acid chain: Probable 2-ketogluconate reductase (334 aa).

NAD(+) contacts are provided by residues 164–165, 244–246, and Asp270; these read RI and AGR. Residue Arg246 is part of the active site. Residue Glu275 is part of the active site. Catalysis depends on His294, which acts as the Proton donor. 294–297 contacts NAD(+); that stretch reads HIGT.

Belongs to the D-isomer specific 2-hydroxyacid dehydrogenase family.

It is found in the cytoplasm. The enzyme catalyses D-gluconate + NADP(+) = 2-dehydro-D-gluconate + NADPH + H(+). Catalyzes the NADPH-dependent reduction of 2,5-diketo-D-gluconate (25DKG) to 5-keto-D-gluconate (5KDG), 2-keto-D-gluconate (2KDG) to D-gluconate, and 2-keto-L-gulonate (2KLG) to L-idonate (IA). This Dictyostelium discoideum (Social amoeba) protein is Probable 2-ketogluconate reductase (tkrA).